The primary structure comprises 369 residues: MLEPQDQKKLDELFSSMQEANGCFLGYPFAKDFDYEPLWRFMSLTGNNLGDPFEPGTYRVNSHAFECDVVDFFARLFRACSCEVWGYVTNGGTEGNIYGLYLARELYPNAVAYFSQDTHYSVSKGVRLLRLEHSVVRSQSNGEINYDDLAQKATRYRTRPAVVVANIGTTMKEGKDDTLKIRAVLHDVGISAIYVHSDAALCGPYAPLLNPKPAFDFADGADSITLSGHKFLGAPMPCGVVLSHKLHVQRVMRNIDYIGSSDTTLSGSRNAFTPIILWYAIRSLGIEGIKQTFQQCERLAAYTADELNVRGVSAWRNPNALTVVLPPVEDSIKTKWQIATQDVSHLVVTPGTTKQQADALIETISNRNR.

H119 contacts substrate. K230 is modified (N6-(pyridoxal phosphate)lysine).

This sequence belongs to the group II decarboxylase family. In terms of assembly, homotetramer. Pyridoxal 5'-phosphate is required as a cofactor.

The catalysed reaction is L-histidine + H(+) = histamine + CO2. This Mesorhizobium japonicum (strain LMG 29417 / CECT 9101 / MAFF 303099) (Mesorhizobium loti (strain MAFF 303099)) protein is Histidine decarboxylase.